Reading from the N-terminus, the 439-residue chain is Glutamine synthetase (439 aa).

One can recognise a GS beta-grasp domain in the interval 13–98 (ENVRFIRLQF…VICDVYTPDG (86 aa)). A GS catalytic domain is found at 105–439 (PRYRLRRMME…NWELQRYLYL (335 aa)). Mg(2+) contacts are provided by Glu-128 and Glu-130. Glu-180 is an ATP binding site. Mg(2+) contacts are provided by Glu-185 and Glu-192. L-glutamate is bound by residues 236–237 (NG) and Gly-237. A Mg(2+)-binding site is contributed by His-241. Residues 243 to 245 (HMS) and Ser-245 each bind ATP. L-glutamate-binding residues include Arg-294, Glu-300, and Arg-312. ATP-binding residues include Arg-312, Arg-317, and Lys-324. Mg(2+) is bound at residue Glu-329. L-glutamate is bound at residue Arg-331.

This sequence belongs to the glutamine synthetase family. As to quaternary structure, oligomer of 12 subunits arranged in the form of two hexagons. In its feedback-inhibited form, interacts with TnrA in order to block its DNA-binding activity. The cofactor is Mg(2+).

Its subcellular location is the cytoplasm. It catalyses the reaction L-glutamate + NH4(+) + ATP = L-glutamine + ADP + phosphate + H(+). Inhibited by glutamine. Glutamine synthetase (GS) is an unusual multitasking protein that functions as an enzyme, a transcription coregulator, and a chaperone in ammonium assimilation and in the regulation of genes involved in nitrogen metabolism. It catalyzes the ATP-dependent biosynthesis of glutamine from glutamate and ammonia. Feedback-inhibited GlnA also interacts with and regulates the activity of the transcriptional regulator TnrA. During nitrogen limitation, TnrA is in its DNA-binding active state and turns on the transcription of genes required for nitrogen assimilation. Under conditions of nitrogen excess, feedback-inhibited GlnA forms a stable complex with TnrA, which inhibits its DNA-binding activity. In contrast, feedback-inhibited GlnA acts as a chaperone to stabilize the DNA-binding activity of GlnR, which represses the transcription of nitrogen assimilation genes. The polypeptide is Glutamine synthetase (Thermotoga maritima (strain ATCC 43589 / DSM 3109 / JCM 10099 / NBRC 100826 / MSB8)).